The primary structure comprises 444 residues: Na(+)/H(+) antiporter NhaA 2 (444 aa).

Transmembrane regions (helical) follow at residues 21–41, 64–84, 102–122, 131–151, 160–180, 185–205, 212–232, 307–327, 342–362, 377–397, and 413–433; these read FSGIFLFFCAVSAMIVANSPF, FSIHDWINDVLMSIFFLMVGL, AFPVIGAVGGMIVPGVIYYVL, GFGIPMATDIAFALGVILLLG, VFLVTLAVADDLGAIVVIAVF, EGLHFIYLGVAAGLLILLTGI, HLGVYIGIGILLWFCVHHSGI, ALQPLCAFIIMPLFAFANAGV, LGVILGLVVGKPLGILSLTFL, WSHIFGAGMLAGIGFTMSMFV, and IAILLASSIAGIVGSLYLIIN.

It belongs to the NhaA Na(+)/H(+) (TC 2.A.33) antiporter family.

It is found in the cell inner membrane. It catalyses the reaction Na(+)(in) + 2 H(+)(out) = Na(+)(out) + 2 H(+)(in). Its function is as follows. Na(+)/H(+) antiporter that extrudes sodium in exchange for external protons. This is Na(+)/H(+) antiporter NhaA 2 from Helicobacter hepaticus (strain ATCC 51449 / 3B1).